The primary structure comprises 337 residues: CMP-sialic acid transporter (337 aa).

Topologically, residues 1 to 9 are cytoplasmic; the sequence is MAAPRDNVT. The chain crosses the membrane as a helical span at residues 10 to 30; that stretch reads LLFKLYCLAVMTLMAAVYTIA. Residues 31–45 are Lumenal-facing; sequence LRYTRTSDKELYFST. A helical transmembrane segment spans residues 46 to 64; it reads TAVCITEVIKLLLSVGILA. Residue lysine 55 participates in CMP-N-acetyl-beta-neuraminate binding. The Cytoplasmic portion of the chain corresponds to 65-87; the sequence is KETGSLGRFKASLRENVLGSPKE. Residues 88-108 traverse the membrane as a helical segment; the sequence is LLKLSVPSLVYAVQNNMAFLA. Position 101–102 (101–102) interacts with CMP-N-acetyl-beta-neuraminate; it reads QN. Residues 109–114 lie on the Lumenal side of the membrane; that stretch reads LSNLDA. The chain crosses the membrane as a helical span at residues 115-135; it reads AVYQVTYQLKIPCTALCTVLM. 117 to 124 is a CMP-N-acetyl-beta-neuraminate binding site; it reads YQVTYQLK. Topologically, residues 136-141 are cytoplasmic; sequence LNRTLS. Residues 142–160 traverse the membrane as a helical segment; the sequence is KLQWVSVFMLCAGVTLVQW. Residues 161–175 are Lumenal-facing; that stretch reads KPAQATKVVVEQNPL. The helical transmembrane segment at 176 to 196 threads the bilayer; it reads LGFGAIAIAVLCSGFAGVYFE. Serine 188 serves as a coordination point for CMP-N-acetyl-beta-neuraminate. Over 197-209 the chain is Cytoplasmic; sequence KVLKSSDTSLWVR. Residue 210-214 participates in CMP-N-acetyl-beta-neuraminate binding; that stretch reads NIQMY. A helical membrane pass occupies residues 210–228; sequence NIQMYLSGIIVTLAGVYLS. The Lumenal portion of the chain corresponds to 229 to 243; it reads DGAEIKEKGFFYGYT. Residues 244 to 262 form a helical membrane-spanning segment; sequence YYVWFVIFLASVGGLYTSV. The Cytoplasmic portion of the chain corresponds to 263–269; that stretch reads VVKYTDN. The helical transmembrane segment at 270 to 288 threads the bilayer; sequence IMKGFSAAAAIVLSTIASV. Lysine 272 serves as a coordination point for CMP-N-acetyl-beta-neuraminate. Topologically, residues 289–296 are lumenal; the sequence is MLFGLQIT. A helical membrane pass occupies residues 297-315; that stretch reads LTFALGTLLVCVSIYLYGL. Over 316 to 337 the chain is Cytoplasmic; it reads PRQDTTSIQQGETASKERVIGV. The interval 316 to 337 is disordered; that stretch reads PRQDTTSIQQGETASKERVIGV.

The protein belongs to the nucleotide-sugar transporter family. SLC35A subfamily. As to quaternary structure, monomer.

The protein resides in the golgi apparatus membrane. It is found in the golgi apparatus. It catalyses the reaction CMP-N-acetyl-beta-neuraminate(in) + CMP(out) = CMP-N-acetyl-beta-neuraminate(out) + CMP(in). The catalysed reaction is CMP-N-acetyl-beta-neuraminate(in) + AMP(out) = CMP-N-acetyl-beta-neuraminate(out) + AMP(in). The enzyme catalyses CDP-L-ribitol(in) + CDP(out) = CDP-L-ribitol(out) + CDP(in). It carries out the reaction UMP(out) + CMP-N-acetyl-beta-neuraminate(in) = UMP(in) + CMP-N-acetyl-beta-neuraminate(out). In terms of biological role, transports CMP-sialic acid from the cytosol into the Golgi apparatus, functioning as an antiporter that exchanges CMP-sialic acid for CMP. Binds both CMP-sialic acid and free CMP, but has higher affinity for free CMP. Also able to exchange CMP-sialic acid for AMP and UMP. Also mediates the transport of CDP-ribitol. The protein is CMP-sialic acid transporter of Homo sapiens (Human).